Consider the following 211-residue polypeptide: Ethylene-responsive transcription factor LEP (211 aa).

Disordered regions lie at residues 1 to 21 and 74 to 110; these read MNTT…TRFL and NFVY…NDPV. A DNA-binding region (AP2/ERF) is located at residues 19–76; that stretch reads RFLGVRRRPWGRYAAEIRDPTTKERHWLGTFDTAEEAALAYDRAARSMRGTRARTNFV. A compositionally biased stretch (low complexity) spans 81-92; the sequence is PPSSSVTSIVSP. Residues 93-107 are compositionally biased toward pro residues; it reads DDPPPPPPPPAPPSN.

This sequence belongs to the AP2/ERF transcription factor family. ERF subfamily. In terms of tissue distribution, expressed in germinating seeds. Present in young shoots, at low levels, especially in leaf primordia and developing leaf blades. Also detected in vascular tissue, mostly in xylem, of young leaves, petioles and hypocotyls.

The protein localises to the nucleus. Cell division-promoting factor involved in leaf blade differentiation, inflorescence branching, as well as in carpel and silique shape. Promotes the number of xylem cells. Positively regulates the gibberellin signaling pathway leading to germination, hypocotyl elongation, and leaf expansion. Probably acts as a transcriptional activator. Binds to the GCC-box pathogenesis-related promoter element. May be involved in the regulation of gene expression by stress factors and by components of stress signal transduction pathways. The chain is Ethylene-responsive transcription factor LEP (LEP) from Arabidopsis thaliana (Mouse-ear cress).